The chain runs to 481 residues: Glutamyl-tRNA(Gln) amidotransferase subunit A (481 aa).

Active-site charge relay system residues include K76 and S151. The active-site Acyl-ester intermediate is the S175.

It belongs to the amidase family. GatA subfamily. As to quaternary structure, heterotrimer of A, B and C subunits.

The catalysed reaction is L-glutamyl-tRNA(Gln) + L-glutamine + ATP + H2O = L-glutaminyl-tRNA(Gln) + L-glutamate + ADP + phosphate + H(+). In terms of biological role, allows the formation of correctly charged Gln-tRNA(Gln) through the transamidation of misacylated Glu-tRNA(Gln) in organisms which lack glutaminyl-tRNA synthetase. The reaction takes place in the presence of glutamine and ATP through an activated gamma-phospho-Glu-tRNA(Gln). The chain is Glutamyl-tRNA(Gln) amidotransferase subunit A from Neisseria meningitidis serogroup C / serotype 2a (strain ATCC 700532 / DSM 15464 / FAM18).